The primary structure comprises 399 residues: Presilphiperfolan-8-beta-ol synthase (399 aa).

A disordered region spans residues 1–60; the sequence is MAIPALEPQLHDADTSSNNMSSNSTDSGYDTNSTTPLEKSEKPNTQELKQQQLDPKRPPF. Residues 15–27 are compositionally biased toward low complexity; that stretch reads TSSNNMSSNSTDS. Residues 28–37 are compositionally biased toward polar residues; sequence GYDTNSTTPL. Positions 141, 285, and 289 each coordinate Mg(2+). The short motif at 141–145 is the DDXXD motif element; the sequence is DDQFD. Residues arginine 373 and tyrosine 374 each coordinate (2E,6E)-farnesyl diphosphate.

It belongs to the terpene synthase family. The cofactor is Mg(2+).

The enzyme catalyses (2E,6E)-farnesyl diphosphate + H2O = presilphiperfolan-8beta-ol + diphosphate. It functions in the pathway secondary metabolite biosynthesis. Presilphiperfolan-8-beta-ol synthase; part of the gene cluster that mediates the biosynthesis of botrydial. Botrydial is necessary for colonization of plant tissue by the T4 strain. It is a strain-dependent virulence factor since highly aggressive strains like SAS56 or B05 still retain substantial virulence when botrydial synthesis is impaired, since they produce also botcinic acid. The first step of botrydial biosynthesis is performed by the sesquiterpene synthase BOT2 which catalyzes the cyclization of farnesyl diphosphate (FPP) to presilphiperfolan-8-beta-ol (PSP). The cytochrome P450 monooxygenase BOT4 then catalyzes the hydroxylation at C-4 to give a probotryane intermediate. Acetylation of the hydroxyl at C-4 is carried out by the acetyltransferase BOT5, followed by the combined action of the P450 monooxygenases BOT3 and BOT1, to yield finally the glycol, via the regio- and stereospecific hydroxylations at C-10 and C-15 of the probotryane intermediates, respectively. The cleavage of the C10-C15 bond of probotryane skeleton is an intriguing and chemically important reaction, which could be mediated by some of the monooxygenases or by a combination of them. It is possible that either BOT3 or BOT1 would oxidize either the 10- or the 15-hydroxy group to the hydroperoxide derivative, which would then undergo heterolytic fragmentation to give the dialdehyde botrydial. Finally, the dehydrogenase BOT7 might be involved in the conversion of botrydial to dihydrobotrydial. In Botryotinia fuckeliana (Noble rot fungus), this protein is Presilphiperfolan-8-beta-ol synthase (BOT2).